The chain runs to 517 residues: Amidophosphoribosyltransferase (517 aa).

Methionine 1 carries the post-translational modification N-acetylmethionine. A propeptide spanning residues 1-11 (MELEELGIREE) is cleaved from the precursor. Residue cysteine 12 is the Nucleophile of the active site. Residues 12–261 (CGVFGCIASG…PGEIVEISRH (250 aa)) enclose the Glutamine amidotransferase type-2 domain. Cysteine 280 contributes to the [4Fe-4S] cluster binding site. Mg(2+)-binding residues include serine 327, aspartate 389, and aspartate 390. Residues cysteine 426, cysteine 503, and cysteine 506 each contribute to the [4Fe-4S] cluster site.

The protein in the C-terminal section; belongs to the purine/pyrimidine phosphoribosyltransferase family. Homotetramer. Requires Mg(2+) as cofactor. [4Fe-4S] cluster is required as a cofactor.

The enzyme catalyses 5-phospho-beta-D-ribosylamine + L-glutamate + diphosphate = 5-phospho-alpha-D-ribose 1-diphosphate + L-glutamine + H2O. It participates in purine metabolism; IMP biosynthesis via de novo pathway; N(1)-(5-phospho-D-ribosyl)glycinamide from 5-phospho-alpha-D-ribose 1-diphosphate: step 1/2. Catalyzes the formation of phosphoribosylamine from phosphoribosylpyrophosphate (PRPP) and glutamine. This chain is Amidophosphoribosyltransferase, found in Mus musculus (Mouse).